We begin with the raw amino-acid sequence, 177 residues long: ATP synthase subunit delta (177 aa).

The protein belongs to the ATPase delta chain family. F-type ATPases have 2 components, F(1) - the catalytic core - and F(0) - the membrane proton channel. F(1) has five subunits: alpha(3), beta(3), gamma(1), delta(1), epsilon(1). F(0) has three main subunits: a(1), b(2) and c(10-14). The alpha and beta chains form an alternating ring which encloses part of the gamma chain. F(1) is attached to F(0) by a central stalk formed by the gamma and epsilon chains, while a peripheral stalk is formed by the delta and b chains.

It is found in the cell inner membrane. F(1)F(0) ATP synthase produces ATP from ADP in the presence of a proton or sodium gradient. F-type ATPases consist of two structural domains, F(1) containing the extramembraneous catalytic core and F(0) containing the membrane proton channel, linked together by a central stalk and a peripheral stalk. During catalysis, ATP synthesis in the catalytic domain of F(1) is coupled via a rotary mechanism of the central stalk subunits to proton translocation. In terms of biological role, this protein is part of the stalk that links CF(0) to CF(1). It either transmits conformational changes from CF(0) to CF(1) or is implicated in proton conduction. The polypeptide is ATP synthase subunit delta (Janthinobacterium sp. (strain Marseille) (Minibacterium massiliensis)).